The sequence spans 491 residues: Acetyl-coenzyme A carboxylase carboxyl transferase subunit beta, chloroplastic (491 aa).

A disordered region spans residues 26-49 (ARPRPIGNTNGSQDPSINDRDKNG). Over residues 32-41 (GNTNGSQDPS) the composition is skewed to polar residues. The CoA carboxyltransferase N-terminal domain occupies 222–491 (LWVQCDNCYG…PLNHNSQVKR (270 aa)). Positions 226, 229, 245, and 248 each coordinate Zn(2+). A C4-type zinc finger spans residues 226 to 248 (CDNCYGLNYKKIFSSKMNICEQC).

It belongs to the AccD/PCCB family. In terms of assembly, acetyl-CoA carboxylase is a heterohexamer composed of biotin carboxyl carrier protein, biotin carboxylase and 2 subunits each of ACCase subunit alpha and ACCase plastid-coded subunit beta (accD). It depends on Zn(2+) as a cofactor.

The protein localises to the plastid. Its subcellular location is the chloroplast stroma. The enzyme catalyses N(6)-carboxybiotinyl-L-lysyl-[protein] + acetyl-CoA = N(6)-biotinyl-L-lysyl-[protein] + malonyl-CoA. Its pathway is lipid metabolism; malonyl-CoA biosynthesis; malonyl-CoA from acetyl-CoA: step 1/1. Component of the acetyl coenzyme A carboxylase (ACC) complex. Biotin carboxylase (BC) catalyzes the carboxylation of biotin on its carrier protein (BCCP) and then the CO(2) group is transferred by the transcarboxylase to acetyl-CoA to form malonyl-CoA. In Ceratophyllum demersum (Rigid hornwort), this protein is Acetyl-coenzyme A carboxylase carboxyl transferase subunit beta, chloroplastic.